The following is a 173-amino-acid chain: DASH complex subunit SPC19 (173 aa).

Belongs to the DASH complex SPC19 family. As to quaternary structure, component of the DASH complex consisting of ASK1, DAD1, DAD2, DAD3, DAD4, DAM1, DUO1, HSK3, SPC19 and SPC34, with a stoichiometry of one copy of each subunit per complex. Multiple DASH complexes oligomerize to form a ring that encircles spindle microtubules and organizes the rod-like NDC80 complexes of the outer kinetochore. DASH complex oligomerization strengthens microtubule attachments. On cytoplasmic microtubules, DASH complexes appear to form patches instead of rings.

It localises to the nucleus. The protein resides in the cytoplasm. The protein localises to the cytoskeleton. Its subcellular location is the spindle. It is found in the chromosome. It localises to the centromere. The protein resides in the kinetochore. Component of the DASH complex that connects microtubules with kinetochores and couples microtubule depolymerisation to chromosome movement; it is involved in retrieving kinetochores to the spindle poles before their re-orientation on the spindle in early mitosis and allows microtubule depolymerization to pull chromosomes apart and resist detachment during anaphase. Kinetochores, consisting of a centromere-associated inner segment and a microtubule-contacting outer segment, play a crucial role in chromosome segregation by mediating the physical connection between centromeric DNA and microtubules. Kinetochores also serve as an input point for the spindle assembly checkpoint, which delays anaphase until all chromosomes have bioriented on the mitotic spindle. This chain is DASH complex subunit SPC19, found in Chaetomium thermophilum (strain DSM 1495 / CBS 144.50 / IMI 039719) (Thermochaetoides thermophila).